The primary structure comprises 412 residues: Imidazolonepropionase (412 aa).

His-76 and His-78 together coordinate Fe(3+). Residues His-76 and His-78 each contribute to the Zn(2+) site. 3 residues coordinate 4-imidazolone-5-propanoate: Arg-85, Tyr-148, and His-181. Tyr-148 contributes to the N-formimidoyl-L-glutamate binding site. His-242 serves as a coordination point for Fe(3+). His-242 serves as a coordination point for Zn(2+). Glu-245 contacts 4-imidazolone-5-propanoate. Asp-317 contacts Fe(3+). Residue Asp-317 coordinates Zn(2+). The N-formimidoyl-L-glutamate site is built by Asn-319 and Gly-321. Ser-322 provides a ligand contact to 4-imidazolone-5-propanoate.

Belongs to the metallo-dependent hydrolases superfamily. HutI family. The cofactor is Zn(2+). Fe(3+) is required as a cofactor.

It is found in the cytoplasm. It catalyses the reaction 4-imidazolone-5-propanoate + H2O = N-formimidoyl-L-glutamate. Its pathway is amino-acid degradation; L-histidine degradation into L-glutamate; N-formimidoyl-L-glutamate from L-histidine: step 3/3. Catalyzes the hydrolytic cleavage of the carbon-nitrogen bond in imidazolone-5-propanoate to yield N-formimidoyl-L-glutamate. It is the third step in the universal histidine degradation pathway. This is Imidazolonepropionase from Staphylococcus aureus (strain USA300 / TCH1516).